Reading from the N-terminus, the 449-residue chain is MTHITFDYSKVLGQFVGEHELDYLQPQVSAADAFLRQGTGPGSDFLGWMDLPENYDKEEFSRIQKAAEKIKSDSEVLVVIGIGGSYLGAKAAIDFLNNHFANLQTAEERKAPQILYAGNSISSTYLADLVEYVQDKEFSVNVISKSGTTTEPAIAFRVFKELLVKKYGQEEANKRIYATTDKVKGAVKVEADANNWETFVVPDNVGGRFSVLTAVGLLPIAASGADITALMEGANAARKDLSSDKISENIAYQYAAVRNVLYRKGYITEILANYEPSLQYFGEWWKQLAGESEGKDQKGIYPTSANFSTDLHSLGQFIQEGYRNLFETVVRVEKPRKNVTIPELTEDLDGLGYLQGKDVDFVNKKATDGVLLAHTDGGVPNMFVTLPTQDAYTLGYTIYFFELAIGLSGYLNSVNPFDQPGVEAYKRNMFALLGKPGFEELSAELNARL.

Glu-291 serves as the catalytic Proton donor. Residues His-312 and Lys-426 contribute to the active site.

This sequence belongs to the GPI family.

The protein resides in the cytoplasm. The catalysed reaction is alpha-D-glucose 6-phosphate = beta-D-fructose 6-phosphate. It functions in the pathway carbohydrate biosynthesis; gluconeogenesis. It participates in carbohydrate degradation; glycolysis; D-glyceraldehyde 3-phosphate and glycerone phosphate from D-glucose: step 2/4. Its function is as follows. Catalyzes the reversible isomerization of glucose-6-phosphate to fructose-6-phosphate. This Streptococcus agalactiae serotype Ia (strain ATCC 27591 / A909 / CDC SS700) protein is Glucose-6-phosphate isomerase.